A 321-amino-acid polypeptide reads, in one-letter code: MALKLAYLLVGGCGGCDMAVVDLSEKLVDALEHLEIVFWAPTVADVKYKDLEAMPDQSIDLGLISGMVRNKENEHLVKVMRQKCKIIVAFGICAALGGIPGMANMHKNEELFENAYIKSPSTDNPNNVIPQPVSKEGEFELTLPEFLDRVKPIDEVIEVDYYVGGCPPHHDHVAKVVEAVITGNLPPKGSWITNGKAVCDVCARNPAVKGKTREFVKEVKRMHEGIPDEEECLLNQGYLCLGPVTQGDCGALCPKVNIRCAGCGGPIPPTRDFGLRAISALGSILADENVTDQLIKKYPVLTKILYRYSLPGAMINKKLFK.

The protein belongs to the [NiFe]/[NiFeSe] hydrogenase small subunit family. The F420-non-reducing hydrogenase is composed of three subunits; MvhA, MvhD and MvhG. It forms a complex with the heterodisulfide reductase (Hdr).

It localises to the cytoplasm. In terms of biological role, part of a complex that provides reducing equivalents for heterodisulfide reductase. The protein is F420-non-reducing hydrogenase iron-sulfur subunit G (mvhG) of Archaeoglobus profundus (strain DSM 5631 / JCM 9629 / NBRC 100127 / Av18).